The chain runs to 374 residues: Chaperone protein DnaJ (374 aa).

A J domain is found at Asp-5–Gly-70. A CR-type zinc finger spans residues Gly-132–Thr-210. Zn(2+) is bound by residues Cys-145, Cys-148, Cys-162, Cys-165, Cys-184, Cys-187, Cys-198, and Cys-201. 4 CXXCXGXG motif repeats span residues Cys-145 to Gly-152, Cys-162 to Gly-169, Cys-184 to Gly-191, and Cys-198 to Gly-205.

The protein belongs to the DnaJ family. As to quaternary structure, homodimer. The cofactor is Zn(2+).

The protein localises to the cytoplasm. Its function is as follows. Participates actively in the response to hyperosmotic and heat shock by preventing the aggregation of stress-denatured proteins and by disaggregating proteins, also in an autonomous, DnaK-independent fashion. Unfolded proteins bind initially to DnaJ; upon interaction with the DnaJ-bound protein, DnaK hydrolyzes its bound ATP, resulting in the formation of a stable complex. GrpE releases ADP from DnaK; ATP binding to DnaK triggers the release of the substrate protein, thus completing the reaction cycle. Several rounds of ATP-dependent interactions between DnaJ, DnaK and GrpE are required for fully efficient folding. Also involved, together with DnaK and GrpE, in the DNA replication of plasmids through activation of initiation proteins. This chain is Chaperone protein DnaJ, found in Saccharophagus degradans (strain 2-40 / ATCC 43961 / DSM 17024).